A 149-amino-acid polypeptide reads, in one-letter code: Calmodulin (149 aa).

Position 2 is an N-acetylalanine (A2). 4 consecutive EF-hand domains span residues 8-43, 44-79, 81-116, and 117-149; these read EQVS…LGQN, PSES…KMKD, DSEE…IGEK, and LTDD…MMQK. Positions 21, 23, 25, 27, 32, 57, 59, 61, 63, 68, 94, 96, 98, 105, 130, 132, 134, 136, and 141 each coordinate Ca(2+).

The protein belongs to the calmodulin family.

Functionally, calmodulin mediates the control of a large number of enzymes, ion channels and other proteins by Ca(2+). Among the enzymes to be stimulated by the calmodulin-Ca(2+) complex are a number of protein kinases and phosphatases. This chain is Calmodulin (camA), found in Emericella nidulans (strain FGSC A4 / ATCC 38163 / CBS 112.46 / NRRL 194 / M139) (Aspergillus nidulans).